The sequence spans 612 residues: MASWLLSTLLFLSPSLVSAKSAADYYVHSLPGAPEGPLLKMHAGHIEVDPQNNGNLFFWHYQNRHIANRQRTVIWLNGGPGCSSMDGALMEVGPYRLKDNETLTYNEGSWDEFANLLFVDQPVGTGFSYVNTDSYLHELDEMSAQFIVFLEEWFRLFPEYERDDIYIAGESYAGQHIPYIAKAIQERNKNVQGKTIASWNLKGLLIGNGWISPNEQYMSYLPYAYEEGLIKEGSRTAKELEVLQSVCKSRLETGKNKVHLNDCEKVMNALLDKTVEDNKCLNMYDIRLRDTTDACGMNWPTDLEDVKPYLQREDVVKALNINPEKKSGWVECSGAVSSAFNPQKSPPSVQLLPGLLESGLQILLFSGDKDLICNHVGTEQLINNMKWNGGTGFETSPGVWAPRHDWSFEGEPAGIYQYARNLTYVLIYNASHMVPYDLPRQSRDMLDRFMNVDIASIGGSPADSRIDGEKLPQTSVGGHPNSTAAEEQEKERIKETEWKAYAKSGEAVLLVVIIGVLVWGFFIWRSRRRHQGYRGVWHKDMSGSSVLERFHNKRTGGADVEAGDFDEAELDDLHSPDLEREHYAVGEDSDEDDISRQHSQQASRAGGSHNLS.

The signal sequence occupies residues Met1–Ala19. The Lumenal segment spans residues Lys20 to Lys503. A glycan (N-linked (GlcNAc...) asparagine) is linked at Asn100. Residues Ser171 and Asp370 contribute to the active site. Residues Asn421 and Asn429 are each glycosylated (N-linked (GlcNAc...) asparagine). The active site involves His432. Residues Ser460–Glu489 are disordered. Residues Pro472–Ala485 are compositionally biased toward polar residues. Asn481 carries N-linked (GlcNAc...) asparagine glycosylation. The helical transmembrane segment at Ser504 to Trp524 threads the bilayer. The Cytoplasmic portion of the chain corresponds to Arg525 to Ser612. The interval Gly557–Ser612 is disordered. The span at Glu561–Leu570 shows a compositional bias: acidic residues. Over residues Asp571–Val585 the composition is skewed to basic and acidic residues. A compositionally biased stretch (polar residues) spans Gln597 to Ser612.

Belongs to the peptidase S10 family.

Its subcellular location is the golgi apparatus. It localises to the trans-Golgi network membrane. It carries out the reaction Preferential release of a C-terminal arginine or lysine residue.. In terms of biological role, protease with a carboxypeptidase B-like function involved in the C-terminal processing of the lysine and arginine residues from protein precursors. Promotes cell fusion and is involved in the programmed cell death. This chain is Pheromone-processing carboxypeptidase kex1 (kex1), found in Aspergillus niger (strain ATCC MYA-4892 / CBS 513.88 / FGSC A1513).